A 214-amino-acid polypeptide reads, in one-letter code: Adenylate kinase (214 aa).

10 to 15 (GAGKGT) serves as a coordination point for ATP. An NMP region spans residues 30-59 (STGDMLRAAVKAGSELGLKAKEIMDAGKLV). AMP-binding positions include Thr31, Arg36, 57–59 (KLV), 85–88 (GFPR), and Gln92. The interval 122-159 (GRRVHAASGRVYHVKFNPPKVEDKDDVTGEDLTIRKDD) is LID. ATP contacts are provided by residues Arg123 and 132-133 (VY). Residues Arg156 and Arg167 each contribute to the AMP site. Residue Arg200 coordinates ATP.

It belongs to the adenylate kinase family. Monomer.

Its subcellular location is the cytoplasm. It carries out the reaction AMP + ATP = 2 ADP. The protein operates within purine metabolism; AMP biosynthesis via salvage pathway; AMP from ADP: step 1/1. Its function is as follows. Catalyzes the reversible transfer of the terminal phosphate group between ATP and AMP. Plays an important role in cellular energy homeostasis and in adenine nucleotide metabolism. This is Adenylate kinase from Yersinia enterocolitica serotype O:8 / biotype 1B (strain NCTC 13174 / 8081).